Reading from the N-terminus, the 298-residue chain is MTSPSAPLTGSIVALVTPMHDDGSVDYPALRKLIDWHIAEGTDCIGVVGTTGESPTVNVEEHCEIIRVSVEQAAKRVPIMAGCGANSTAEAIELARFAKKVGADSQLQVVPYYNKPTQEGQYRHFKAIAEAVGDLPMVLYNVPGRSVADMQHETVLRLTQVPGIVGIKEATGNIERAQWLIRDVPKGFAVYSGDDPTAVALMLCGGQGNISVTANVAPRLMHELCVAALAGDTRRAMEIQFRLMPVHKQLFVEANPIPVKWAVQRMGLCGGALRLPMTPLSQGNEAVVEAALRAAGLL.

A pyruvate-binding site is contributed by Thr-51. Tyr-140 (proton donor/acceptor) is an active-site residue. Residue Lys-168 is the Schiff-base intermediate with substrate of the active site. Ile-210 is a pyruvate binding site.

This sequence belongs to the DapA family. Homotetramer; dimer of dimers.

It is found in the cytoplasm. The enzyme catalyses L-aspartate 4-semialdehyde + pyruvate = (2S,4S)-4-hydroxy-2,3,4,5-tetrahydrodipicolinate + H2O + H(+). It functions in the pathway amino-acid biosynthesis; L-lysine biosynthesis via DAP pathway; (S)-tetrahydrodipicolinate from L-aspartate: step 3/4. In terms of biological role, catalyzes the condensation of (S)-aspartate-beta-semialdehyde [(S)-ASA] and pyruvate to 4-hydroxy-tetrahydrodipicolinate (HTPA). This chain is 4-hydroxy-tetrahydrodipicolinate synthase, found in Acidovorax sp. (strain JS42).